Consider the following 147-residue polypeptide: Mineralocorticoid receptor (147 aa).

The region spanning 1 to 147 (FALSWRSYKH…SQALKVEFPA (147 aa)) is the NR LBD domain. 2 residues coordinate 21-hydroxyprogesterone: Arg-6 and Thr-134. Residues Arg-6 and Thr-134 each contribute to the aldosterone site. Arg-6 and Thr-134 together coordinate progesterone.

This sequence belongs to the nuclear hormone receptor family. NR3 subfamily.

The protein resides in the cytoplasm. Its subcellular location is the nucleus. Receptor for both mineralocorticoids (MC) such as aldosterone and glucocorticoids (GC) such as corticosterone or cortisol. Binds to mineralocorticoid response elements (MRE) and transactivates target genes. The effect of MC is to increase ion and water transport and thus raise extracellular fluid volume and blood pressure and lower potassium levels. The sequence is that of Mineralocorticoid receptor (NR3C2) from Gallus gallus (Chicken).